The sequence spans 235 residues: Sugar fermentation stimulation protein homolog (235 aa).

This sequence belongs to the SfsA family.

In Aliivibrio fischeri (strain ATCC 700601 / ES114) (Vibrio fischeri), this protein is Sugar fermentation stimulation protein homolog.